A 545-amino-acid polypeptide reads, in one-letter code: Sensory neuron membrane protein 1 (545 aa).

Topologically, residues 1 to 10 are cytoplasmic; the sequence is MELKERNFKK. The chain crosses the membrane as a helical span at residues 11–31; that stretch reads IGLICVAVLLCGMVFSYGIFP. The Extracellular portion of the chain corresponds to 32–464; that stretch reads SILRFMIKQN…LFLGLKFNAT (433 aa). N-linked (GlcNAc...) asparagine glycosylation is found at asparagine 69, asparagine 214, and asparagine 227. Cystine bridges form between cysteine 266/cysteine 331, cysteine 295/cysteine 351, and cysteine 333/cysteine 340. N-linked (GlcNAc...) asparagine glycosylation is found at asparagine 444 and asparagine 462. A helical membrane pass occupies residues 465 to 485; sequence VKWLTIIIGTVGAVGSAYMYF. Topologically, residues 486-545 are cytoplasmic; the sequence is RKETKTTDVAPVDVSTPDTNPSSAKDGVVNVSLGRNLPPVIDGLDKPPKLRATELQQERY.

The protein belongs to the CD36 family. Selectively expressed in antenna.

It is found in the cell membrane. Functionally, plays an olfactory role that is not restricted to pheromone sensitivity. The protein is Sensory neuron membrane protein 1 (snmp1) of Anopheles gambiae (African malaria mosquito).